The chain runs to 364 residues: Histidinol-phosphate aminotransferase 1 (364 aa).

The residue at position 211 (Lys211) is an N6-(pyridoxal phosphate)lysine.

This sequence belongs to the class-II pyridoxal-phosphate-dependent aminotransferase family. Histidinol-phosphate aminotransferase subfamily. In terms of assembly, homodimer. Requires pyridoxal 5'-phosphate as cofactor.

The enzyme catalyses L-histidinol phosphate + 2-oxoglutarate = 3-(imidazol-4-yl)-2-oxopropyl phosphate + L-glutamate. It functions in the pathway amino-acid biosynthesis; L-histidine biosynthesis; L-histidine from 5-phospho-alpha-D-ribose 1-diphosphate: step 7/9. This chain is Histidinol-phosphate aminotransferase 1, found in Legionella pneumophila subsp. pneumophila (strain Philadelphia 1 / ATCC 33152 / DSM 7513).